A 416-amino-acid chain; its full sequence is Serine hydroxymethyltransferase (416 aa).

(6S)-5,6,7,8-tetrahydrofolate is bound by residues L118 and 122–124; that span reads GHL. An N6-(pyridoxal phosphate)lysine modification is found at K226. E242 contributes to the (6S)-5,6,7,8-tetrahydrofolate binding site.

The protein belongs to the SHMT family. In terms of assembly, homodimer. It depends on pyridoxal 5'-phosphate as a cofactor.

It localises to the cytoplasm. It catalyses the reaction (6R)-5,10-methylene-5,6,7,8-tetrahydrofolate + glycine + H2O = (6S)-5,6,7,8-tetrahydrofolate + L-serine. Its pathway is one-carbon metabolism; tetrahydrofolate interconversion. It functions in the pathway amino-acid biosynthesis; glycine biosynthesis; glycine from L-serine: step 1/1. Its function is as follows. Catalyzes the reversible interconversion of serine and glycine with tetrahydrofolate (THF) serving as the one-carbon carrier. This reaction serves as the major source of one-carbon groups required for the biosynthesis of purines, thymidylate, methionine, and other important biomolecules. Also exhibits THF-independent aldolase activity toward beta-hydroxyamino acids, producing glycine and aldehydes, via a retro-aldol mechanism. This chain is Serine hydroxymethyltransferase, found in Helicobacter pylori (strain J99 / ATCC 700824) (Campylobacter pylori J99).